We begin with the raw amino-acid sequence, 307 residues long: Protoheme IX farnesyltransferase (307 aa).

The next 9 membrane-spanning stretches (helical) occupy residues Leu-28–Leu-48, Phe-50–Trp-70, Phe-99–Trp-117, Ile-121–Leu-138, Ile-146–Gly-166, Val-173–Phe-193, Ile-219–Thr-239, Ala-241–Val-261, and Leu-278–Tyr-298.

It belongs to the UbiA prenyltransferase family. Protoheme IX farnesyltransferase subfamily.

The protein localises to the cell inner membrane. The catalysed reaction is heme b + (2E,6E)-farnesyl diphosphate + H2O = Fe(II)-heme o + diphosphate. Its pathway is porphyrin-containing compound metabolism; heme O biosynthesis; heme O from protoheme: step 1/1. Functionally, converts heme B (protoheme IX) to heme O by substitution of the vinyl group on carbon 2 of heme B porphyrin ring with a hydroxyethyl farnesyl side group. This Erythrobacter litoralis (strain HTCC2594) protein is Protoheme IX farnesyltransferase.